Here is a 162-residue protein sequence, read N- to C-terminus: Phosphopantetheine adenylyltransferase (162 aa).

Ser9 is a binding site for substrate. Residues 9 to 10 (SF) and His17 each bind ATP. The substrate site is built by Lys41, Thr73, and Arg87. ATP is bound by residues 88-90 (GLR), Glu98, and 122-128 (NQNISSS).

This sequence belongs to the bacterial CoaD family. In terms of assembly, homohexamer. It depends on Mg(2+) as a cofactor.

It is found in the cytoplasm. The enzyme catalyses (R)-4'-phosphopantetheine + ATP + H(+) = 3'-dephospho-CoA + diphosphate. It participates in cofactor biosynthesis; coenzyme A biosynthesis; CoA from (R)-pantothenate: step 4/5. Functionally, reversibly transfers an adenylyl group from ATP to 4'-phosphopantetheine, yielding dephospho-CoA (dPCoA) and pyrophosphate. The chain is Phosphopantetheine adenylyltransferase from Leuconostoc mesenteroides subsp. mesenteroides (strain ATCC 8293 / DSM 20343 / BCRC 11652 / CCM 1803 / JCM 6124 / NCDO 523 / NBRC 100496 / NCIMB 8023 / NCTC 12954 / NRRL B-1118 / 37Y).